The primary structure comprises 410 residues: Peptidase T (410 aa).

His79 lines the Zn(2+) pocket. Asp81 is an active-site residue. Asp142 is a binding site for Zn(2+). Catalysis depends on Glu176, which acts as the Proton acceptor. The Zn(2+) site is built by Glu177, Asp199, and His381.

It belongs to the peptidase M20B family. Zn(2+) is required as a cofactor.

Its subcellular location is the cytoplasm. The enzyme catalyses Release of the N-terminal residue from a tripeptide.. In terms of biological role, cleaves the N-terminal amino acid of tripeptides. The polypeptide is Peptidase T (Listeria monocytogenes serotype 4a (strain HCC23)).